The chain runs to 395 residues: Chalcone synthase 1 (395 aa).

N-acetylvaline is present on valine 2. Cysteine 169 is a catalytic residue.

Belongs to the thiolase-like superfamily. Chalcone/stilbene synthases family.

It carries out the reaction (E)-4-coumaroyl-CoA + 3 malonyl-CoA + 3 H(+) = 2',4,4',6'-tetrahydroxychalcone + 3 CO2 + 4 CoA. Its pathway is secondary metabolite biosynthesis; flavonoid biosynthesis. Functionally, the primary product of this enzyme is 4,2',4',6'-tetrahydroxychalcone (also termed naringenin-chalcone or chalcone) which can under specific conditions spontaneously isomerize into naringenin. The sequence is that of Chalcone synthase 1 (CHS1) from Sinapis alba (White mustard).